The primary structure comprises 150 residues: MSYTCNSGNYSSQSFGGFLRQPVSTYNSFYPTSNVVYSPKNFQLGSSFYNGQQETFSEPLEGHLPCVGSASFHTSCFRPKQYFSSPCQGGFTGSFGYGNTGFGAFGFGSSGIRSQGCGSNFYRPGYFSSKSIQSSYYQPGYSSGFCGSNF.

The protein belongs to the PMG family. As to quaternary structure, interacts with hair keratins. Expressed at high levels in skin and at lower levels in the developing mammary gland.

In terms of biological role, in the hair cortex, hair keratin intermediate filaments are embedded in an interfilamentous matrix, consisting of hair keratin-associated proteins (KRTAP), which are essential for the formation of a rigid and resistant hair shaft through their extensive disulfide bond cross-linking with abundant cysteine residues of hair keratins. The matrix proteins include the high-sulfur and high-glycine-tyrosine keratins. The sequence is that of Keratin-associated protein 15-1 from Mus musculus (Mouse).